Consider the following 613-residue polypeptide: Sulfhydryl oxidase 1 (613 aa).

The first 30 residues, 1–30, serve as a signal peptide directing secretion; the sequence is MTGCGRRSGWLPPLRLLLLPLLLGGPGVGA. Positions 37-157 constitute a Thioredoxin domain; the sequence is YSASDPLTLL…RERLIDALES (121 aa). Catalysis depends on nucleophile residues Cys71 and Cys74. Cystine bridges form between Cys71-Cys74 and Cys102-Cys111. Residues Asn131 and Asn244 are each glycosylated (N-linked (GlcNAc...) asparagine). The cysteines at positions 394 and 406 are disulfide-linked. Residues 397–504 enclose the ERV/ALR sulfhydryl oxidase domain; sequence SESHFRGFPC…EDPQFPKVQW (108 aa). Arg402, Trp409, and His413 together coordinate FAD. Residue Ser427 is modified to Phosphoserine. Cysteines 450 and 453 form a disulfide. FAD-binding positions include Asp452, His456, 479-486, Lys501, and Trp504; that span reads WTSHNRVN. Cysteines 510 and 513 form a disulfide.

It belongs to the quiescin-sulfhydryl oxidase (QSOX) family. Monomer. FAD serves as cofactor. N-glycosylated. O-glycosylated on Thr and Ser residues. In terms of tissue distribution, detected in endometrium and in uterus glandular epithelial cells (at protein level). Expressed in testis, placenta, pancreas, lung, ovary, endometrium, but not in brain, liver and kidney tissues. Higher expression in epithelial cells.

It localises to the secreted. It carries out the reaction 2 R'C(R)SH + O2 = R'C(R)S-S(R)CR' + H2O2. Functionally, catalyzes the oxidation of sulfhydryl groups in peptide and protein thiols to disulfides with the reduction of oxygen to hydrogen peroxide. Plays a role in disulfide bond formation in a variety of extracellular proteins. In fibroblasts, required for normal incorporation of laminin into the extracellular matrix, and thereby for normal cell-cell adhesion and cell migration. The sequence is that of Sulfhydryl oxidase 1 (QSOX1) from Cavia porcellus (Guinea pig).